The sequence spans 186 residues: dCTP deaminase (186 aa).

107–112 (KSTYAR) lines the dCTP pocket. E133 functions as the Proton donor/acceptor in the catalytic mechanism. DCTP is bound by residues Q152, Y166, and Q176.

This sequence belongs to the dCTP deaminase family. In terms of assembly, homotrimer.

It catalyses the reaction dCTP + H2O + H(+) = dUTP + NH4(+). Its pathway is pyrimidine metabolism; dUMP biosynthesis; dUMP from dCTP (dUTP route): step 1/2. Its function is as follows. Catalyzes the deamination of dCTP to dUTP. This is dCTP deaminase from Campylobacter jejuni subsp. doylei (strain ATCC BAA-1458 / RM4099 / 269.97).